A 175-amino-acid chain; its full sequence is CEN-like protein 4 (175 aa).

It belongs to the phosphatidylethanolamine-binding protein family. As to expression, expressed in vegetative axillary meristems but not in the main shoot meristem.

The protein resides in the cytoplasm. Its function is as follows. May form complexes with phosphorylated ligands by interfering with kinases and their effectors. In Nicotiana tabacum (Common tobacco), this protein is CEN-like protein 4 (CET4).